The sequence spans 445 residues: Exodeoxyribonuclease 7 large subunit (445 aa).

It belongs to the XseA family. As to quaternary structure, heterooligomer composed of large and small subunits.

It is found in the cytoplasm. It carries out the reaction Exonucleolytic cleavage in either 5'- to 3'- or 3'- to 5'-direction to yield nucleoside 5'-phosphates.. Functionally, bidirectionally degrades single-stranded DNA into large acid-insoluble oligonucleotides, which are then degraded further into small acid-soluble oligonucleotides. The sequence is that of Exodeoxyribonuclease 7 large subunit from Xanthomonas oryzae pv. oryzae (strain KACC10331 / KXO85).